A 77-amino-acid polypeptide reads, in one-letter code: U3-theraphotoxin-Hhn1k (77 aa).

Positions 1–14 are cleaved as a signal peptide; it reads TFAGLVLLFVVCYA. Positions 15-42 are excised as a propeptide; the sequence is SESEEKEFPKEMLSSIFAVDNDFKQEER. 2 disulfide bridges follow: C44–C57 and C56–C69.

Belongs to the neurotoxin 10 (Hwtx-1) family. 51 (Hntx-8) subfamily. Hntx-8 sub-subfamily. As to expression, expressed by the venom gland.

The protein localises to the secreted. Functionally, ion channel inhibitor. This Cyriopagopus hainanus (Chinese bird spider) protein is U3-theraphotoxin-Hhn1k.